A 379-amino-acid chain; its full sequence is S-(hydroxymethyl)glutathione dehydrogenase (379 aa).

Zn(2+) is bound at residue Cys-47. His-48 is an NAD(+) binding site. The Zn(2+) site is built by His-69, Glu-70, Cys-99, Cys-102, Cys-105, Cys-113, and Cys-176. NAD(+) contacts are provided by residues 201-206 (GAGCIG), Asp-225, and 296-298 (IGV).

Belongs to the zinc-containing alcohol dehydrogenase family. Class-III subfamily. Zn(2+) is required as a cofactor.

The catalysed reaction is a primary alcohol + NAD(+) = an aldehyde + NADH + H(+). The enzyme catalyses a secondary alcohol + NAD(+) = a ketone + NADH + H(+). It catalyses the reaction S-(hydroxymethyl)glutathione + NADP(+) = S-formylglutathione + NADPH + H(+). It carries out the reaction S-(hydroxymethyl)glutathione + NAD(+) = S-formylglutathione + NADH + H(+). The catalysed reaction is S-nitrosoglutathione + NADH + H(+) = S-(hydroxysulfenamide)glutathione + NAD(+). In terms of biological role, oxidizes long-chain alcohols and, in the presence of glutathione, is able to oxidize formaldehyde. Also acts as a S-nitroso-glutathione reductase by catalyzing the NADH-dependent reduction of S-nitrosoglutathione, thereby regulating protein S-nitrosylation. The chain is S-(hydroxymethyl)glutathione dehydrogenase (FLD1) from Komagataella pastoris (Yeast).